The primary structure comprises 688 residues: Probable transcription factor gsfR1 (688 aa).

A compositionally biased stretch (acidic residues) spans 1 to 16 (MSDGPETAEGDTDDAV). The tract at residues 1–95 (MSDGPETAEG…TPVSSRGSIA (95 aa)) is disordered. Positions 24–36 (RVASESSARSQPR) are enriched in polar residues. The span at 58–75 (EHSKEKNVSRRLPTEKTP) shows a compositional bias: basic and acidic residues.

The protein localises to the nucleus. In terms of biological role, probable transcription factor that regulates expression of the gene cluster that mediates the biosynthesis of Griseofulvin, an important antifungal drug that has been in use for a long time for treating dermatophyte infections. This Penicillium aethiopicum protein is Probable transcription factor gsfR1.